Here is a 409-residue protein sequence, read N- to C-terminus: Lissencephaly-1 homolog (409 aa).

Positions 7–39 (QREELNQAIADYLGTNGYADSLEAFRKEADLST) constitute a LisH domain. Residues 54–81 (TSVIRLQKKVMELEAKLTEAEKEVIEGA) adopt a coiled-coil conformation. 7 WD repeats span residues 104-145 (GHRA…RSLK), 146-185 (GHTD…ACVK), 189-228 (GHDH…CVKT), 231-270 (GHRE…CKVE), 273-332 (DHEH…CLLT), 335-374 (GHDN…CMKT), and 377-409 (AHQH…WECR).

This sequence belongs to the WD repeat LIS1/nudF family.

The protein localises to the cytoplasm. It localises to the cytoskeleton. The protein resides in the microtubule organizing center. It is found in the centrosome. Functionally, positively regulates the activity of the minus-end directed microtubule motor protein dynein. May enhance dynein-mediated microtubule sliding by targeting dynein to the microtubule plus end. Required for several dynein- and microtubule-dependent processes. The polypeptide is Lissencephaly-1 homolog (Drosophila willistoni (Fruit fly)).